We begin with the raw amino-acid sequence, 345 residues long: L-threonine 3-dehydrogenase (345 aa).

Cys-42 lines the Zn(2+) pocket. Residues Thr-44 and His-47 each act as charge relay system in the active site. Zn(2+)-binding residues include His-67, Glu-68, Cys-97, Cys-100, Cys-103, and Cys-111. Residues Ile-179, Asp-199, Arg-204, 266–268, and 290–291 each bind NAD(+); these read LGI and IY.

This sequence belongs to the zinc-containing alcohol dehydrogenase family. Homotetramer. Zn(2+) is required as a cofactor.

Its subcellular location is the cytoplasm. It carries out the reaction L-threonine + NAD(+) = (2S)-2-amino-3-oxobutanoate + NADH + H(+). The protein operates within amino-acid degradation; L-threonine degradation via oxydo-reductase pathway; glycine from L-threonine: step 1/2. In terms of biological role, catalyzes the NAD(+)-dependent oxidation of L-threonine to 2-amino-3-ketobutyrate. The protein is L-threonine 3-dehydrogenase of Sinorhizobium fredii (strain NBRC 101917 / NGR234).